A 344-amino-acid chain; its full sequence is Isopentenyl-diphosphate delta-isomerase (344 aa).

9-10 (RK) contacts substrate. Residues 65–67 (AMT), serine 95, and asparagine 124 contribute to the FMN site. Glutamine 154 contacts substrate. Glutamate 155 contacts Mg(2+). Residues lysine 185, threonine 215, 259 to 261 (GVR), and 280 to 281 (SG) contribute to the FMN site.

Belongs to the IPP isomerase type 2 family. In terms of assembly, homooctamer. Dimer of tetramers. FMN is required as a cofactor. NADPH serves as cofactor. It depends on Mg(2+) as a cofactor.

It is found in the cytoplasm. The catalysed reaction is isopentenyl diphosphate = dimethylallyl diphosphate. In terms of biological role, involved in the biosynthesis of isoprenoids. Catalyzes the 1,3-allylic rearrangement of the homoallylic substrate isopentenyl (IPP) to its allylic isomer, dimethylallyl diphosphate (DMAPP). The protein is Isopentenyl-diphosphate delta-isomerase of Lacticaseibacillus paracasei (strain ATCC 334 / BCRC 17002 / CCUG 31169 / CIP 107868 / KCTC 3260 / NRRL B-441) (Lactobacillus paracasei).